The sequence spans 387 residues: Yellow-related salivary protein ASP2 (387 aa).

Positions M1 to A18 are cleaved as a signal peptide.

Belongs to the major royal jelly protein family. As to expression, female salivary gland (at protein level).

The protein resides in the secreted. Probably modulates blood feeding of sand flies on vertebrate species by binding and sequestering different mediators involved in the host response. Binds biogenic amines. Binds octopamine with high affinity. Binds serotonin and dopamine with medium affinity. Poorly binds histamine. Does not bind noradrenaline and adrenaline. This Phlebotomus orientalis (Phlebotomine sand fly) protein is Yellow-related salivary protein ASP2.